The primary structure comprises 1448 residues: Sister chromatid cohesion protein PDS5 homolog B-A (1448 aa).

Residues 383–419 form an HEAT repeat; the sequence is LLVNDQLLNFVRERTLDKRWRVRKEAMMGLAQIYKKY. Positions 1141–1155 are enriched in polar residues; it reads AGKQMLSKSSRMETV. Residues 1141–1448 form a disordered region; the sequence is AGKQMLSKSS…TGRLRSAKKR (308 aa). The span at 1156–1168 shows a compositional bias: low complexity; sequence SNASSGSNPSSPG. Residues 1177–1186 show a composition bias toward acidic residues; the sequence is MELDQSENED. Composition is skewed to basic and acidic residues over residues 1196-1214, 1233-1243, and 1264-1273; these read KKSDKRDDSDLLKSELEKP, ELSKPAQEPKS, and WQEKRLKEDL. Residues 1285-1294 show a composition bias toward basic residues; the sequence is KKGRRGRPPK. The a.T hook 1 DNA-binding region spans 1286–1298; that stretch reads KGRRGRPPKSAKM. Positions 1324 to 1341 are enriched in acidic residues; that stretch reads PTDEDDHLEISEEQDFEN. The segment covering 1346–1356 has biased composition (basic residues); the sequence is RKGRGSSRRTP. 2 DNA-binding regions (a.T hook) span residues 1374–1386 and 1390–1402; these read QKRRGRPPKTPTV and KSHVGRPRKVVSK. Basic residues predominate over residues 1389 to 1399; that stretch reads KKSHVGRPRKV.

The protein belongs to the PDS5 family. Interacts with the cohesin complex. In terms of processing, phosphorylated in mitotic cells.

The protein resides in the nucleus. Its function is as follows. Plays a role in androgen-induced proliferative arrest. Required for maintenance of sister chromatid cohesion during mitosis. The polypeptide is Sister chromatid cohesion protein PDS5 homolog B-A (pds5b-a) (Xenopus laevis (African clawed frog)).